The chain runs to 101 residues: Small ribosomal subunit protein uS14 (101 aa).

It belongs to the universal ribosomal protein uS14 family. Part of the 30S ribosomal subunit. Contacts proteins S3 and S10.

In terms of biological role, binds 16S rRNA, required for the assembly of 30S particles and may also be responsible for determining the conformation of the 16S rRNA at the A site. The polypeptide is Small ribosomal subunit protein uS14 (Marinobacter nauticus (strain ATCC 700491 / DSM 11845 / VT8) (Marinobacter aquaeolei)).